Here is a 184-residue protein sequence, read N- to C-terminus: Protein Syd (184 aa).

This sequence belongs to the Syd family.

The protein resides in the cell inner membrane. Its function is as follows. Interacts with the SecY protein in vivo. May bind preferentially to an uncomplexed state of SecY, thus functioning either as a chelating agent for excess SecY in the cell or as a regulatory factor that negatively controls the translocase function. This Psychromonas ingrahamii (strain DSM 17664 / CCUG 51855 / 37) protein is Protein Syd.